The chain runs to 306 residues: Polyphosphate kinase PPK2B (306 aa).

The protein belongs to the polyphosphate kinase 2 (PPK2) family. Class I subfamily. In terms of assembly, homotetramer. The cofactor is Mn(2+).

The catalysed reaction is [phosphate](n) + ATP = [phosphate](n+1) + ADP. It carries out the reaction [phosphate](n) + GTP = [phosphate](n+1) + GDP. Its function is as follows. Catalyzes the synthesis of polyP from ATP or GTP. Can also use inorganic polyphosphate (polyP) as a donor to convert ADP to ATP, but the activity is 10-fold higher in vitro for polyP synthesis than for ATP formation. This is Polyphosphate kinase PPK2B from Corynebacterium glutamicum (strain ATCC 13032 / DSM 20300 / JCM 1318 / BCRC 11384 / CCUG 27702 / LMG 3730 / NBRC 12168 / NCIMB 10025 / NRRL B-2784 / 534).